The following is a 252-amino-acid chain: Probable NADP-dependent dehydrogenase HI_1430 (252 aa).

An NADP(+)-binding site is contributed by 7-31 (LVTGATAGFGLAICKKLIEAGYKVI). Substrate is bound at residue Ser137. Tyr150 serves as the catalytic Proton acceptor.

Belongs to the short-chain dehydrogenases/reductases (SDR) family.

This Haemophilus influenzae (strain ATCC 51907 / DSM 11121 / KW20 / Rd) protein is Probable NADP-dependent dehydrogenase HI_1430.